We begin with the raw amino-acid sequence, 388 residues long: Succinate--CoA ligase [ADP-forming] subunit beta (388 aa).

The ATP-grasp domain maps to 9–244 (KQLFAEYGLP…PSQDDAREAH (236 aa)). ATP contacts are provided by residues Lys-46, 53–55 (GRG), Glu-99, Thr-102, and Glu-107. Mg(2+) contacts are provided by Asn-199 and Asp-213. Substrate is bound by residues Asn-264 and 321-323 (GIV).

This sequence belongs to the succinate/malate CoA ligase beta subunit family. As to quaternary structure, heterotetramer of two alpha and two beta subunits. It depends on Mg(2+) as a cofactor.

The enzyme catalyses succinate + ATP + CoA = succinyl-CoA + ADP + phosphate. It carries out the reaction GTP + succinate + CoA = succinyl-CoA + GDP + phosphate. Its pathway is carbohydrate metabolism; tricarboxylic acid cycle; succinate from succinyl-CoA (ligase route): step 1/1. Functionally, succinyl-CoA synthetase functions in the citric acid cycle (TCA), coupling the hydrolysis of succinyl-CoA to the synthesis of either ATP or GTP and thus represents the only step of substrate-level phosphorylation in the TCA. The beta subunit provides nucleotide specificity of the enzyme and binds the substrate succinate, while the binding sites for coenzyme A and phosphate are found in the alpha subunit. The chain is Succinate--CoA ligase [ADP-forming] subunit beta from Pseudomonas putida (strain ATCC 700007 / DSM 6899 / JCM 31910 / BCRC 17059 / LMG 24140 / F1).